Reading from the N-terminus, the 259-residue chain is tRNA (guanine-N(7)-)-methyltransferase (259 aa).

Positions 1–11 (MSNTDNSDKNT) are enriched in basic and acidic residues. The disordered stretch occupies residues 1 to 29 (MSNTDNSDKNTKPTGYRPPQTDFNTEFGN). Positions 89, 114, 141, and 164 each coordinate S-adenosyl-L-methionine. The active site involves Asp-164. Substrate-binding positions include Lys-168, Asp-200, and 238–241 (TKFE).

Belongs to the class I-like SAM-binding methyltransferase superfamily. TrmB family.

The catalysed reaction is guanosine(46) in tRNA + S-adenosyl-L-methionine = N(7)-methylguanosine(46) in tRNA + S-adenosyl-L-homocysteine. Its pathway is tRNA modification; N(7)-methylguanine-tRNA biosynthesis. Its function is as follows. Catalyzes the formation of N(7)-methylguanine at position 46 (m7G46) in tRNA. This chain is tRNA (guanine-N(7)-)-methyltransferase, found in Corynebacterium diphtheriae (strain ATCC 700971 / NCTC 13129 / Biotype gravis).